Consider the following 462-residue polypeptide: Kinetochore protein nsk1 (462 aa).

Residues 104–120 (PSKNHETSLSPSKSTID) show a composition bias toward polar residues. Disordered stretches follow at residues 104–161 (PSKN…CPGI), 180–240 (EKYG…PLRT), and 320–462 (NQLF…NIQS). Positions 121–138 (NNERKLDNEIDNYKHDVK) are enriched in basic and acidic residues. The span at 146–156 (GKTSNPSQGTT) shows a compositional bias: polar residues. The span at 180–189 (EKYGKTDLGK) shows a compositional bias: basic and acidic residues. The segment covering 229-240 (KNRSSTFSPLRT) has biased composition (polar residues). Basic and acidic residues predominate over residues 324-333 (KSEEEKDPVG). Polar residues predominate over residues 422–444 (WPQNLAKNNINSEPNTPTKSNID). Residues 449-462 (HSARAHKTRKNIQS) show a composition bias toward basic residues.

As to quaternary structure, interacts with dlc1. The dlc1-nsk1 complex seems to oligomerize in chain-like structures. Also binds directly to spindle microtubules. Phosphorylated by cdk1 at prometaphase arrest. Phosphorylation prevents nsk1 kinetochore and spindle targeting. Dephosphorylated by clp1 at anaphase onset controls its relocalization.

Its subcellular location is the nucleus. It localises to the nucleolus. The protein resides in the cytoplasm. The protein localises to the cytoskeleton. It is found in the spindle. Its subcellular location is the chromosome. It localises to the centromere. The protein resides in the kinetochore. Ensures chromosome alignment and accurate chromosome segregation during mitosis. Promotes proper kinetochore-microtubule (k-MT) interactions during anaphase B. The phosphorylation status of nsk1 affects the proper k-MT coupling, ensuring that it interacts stably only at the correct time during mitosis. This Schizosaccharomyces pombe (strain 972 / ATCC 24843) (Fission yeast) protein is Kinetochore protein nsk1 (nsk1).